We begin with the raw amino-acid sequence, 614 residues long: MYELLESINSPEDLRRLDRKELHELARQLRAFLINSVAQTGGHLSSNLGVVELTIALHYVFNTPEDRVVWDVGHQTYPHKILTGRRKDMGNLRRPGGIAGFPRRDESIYDTFGTGHSSTSISAALGMAVAAQKTGSDRHSIAVIGDGAMTAGMAFEALNNAGAMDANILVILNDNDMSISPNVGALTNYLAKLLSGPLYTTVRRSGEKVLGVVPPVREFAKRAEEHVKGMVTPGTLFEEFGFNYIGPIDGHDIDVLITTLRNIRELKGPQFLHIATQKGHGYQPAEDNPGKFHGVGKFDPSNGCSIAQAGKKTYTQVFSDWLVDMAARDERLVGITPAMCDGSGLNAFAEQFPDRFFDVGIAEQHALTFAAGMACDGLKPVVAIYSTFLQRAYDQFIHDIALQNLPVMFAIDRAGLVGADGPTHAGSFDLSYLRCIPNIIIMAPSDENECRQMLYTAYLHDGPSAVRYPRGGGPGATITRDMQLLPIGKGELRRQGSWVAILAFGSMLAPALEAAETLDATVANMRFVKPLDANLINQLASSHTLIVTVEENAVMGGAGAAVMECMQAADIHTPVLCLGLPDMFIEHGVHETMLAECGLNAAGIIAAIEKKLTK.

Thiamine diphosphate contacts are provided by residues His74 and 115-117 (GHS). Residue Asp146 participates in Mg(2+) binding. Residues 147-148 (GA), Asn175, Tyr282, and Glu363 each bind thiamine diphosphate. Asn175 contacts Mg(2+).

This sequence belongs to the transketolase family. DXPS subfamily. Homodimer. Mg(2+) is required as a cofactor. Thiamine diphosphate serves as cofactor.

It catalyses the reaction D-glyceraldehyde 3-phosphate + pyruvate + H(+) = 1-deoxy-D-xylulose 5-phosphate + CO2. The protein operates within metabolic intermediate biosynthesis; 1-deoxy-D-xylulose 5-phosphate biosynthesis; 1-deoxy-D-xylulose 5-phosphate from D-glyceraldehyde 3-phosphate and pyruvate: step 1/1. Catalyzes the acyloin condensation reaction between C atoms 2 and 3 of pyruvate and glyceraldehyde 3-phosphate to yield 1-deoxy-D-xylulose-5-phosphate (DXP). The protein is 1-deoxy-D-xylulose-5-phosphate synthase of Methylobacillus flagellatus (strain ATCC 51484 / DSM 6875 / VKM B-1610 / KT).